A 939-amino-acid chain; its full sequence is Protein translocase subunit SecA 1 (939 aa).

ATP is bound by residues glutamine 85, 103–107, and aspartate 504; that span reads GEGKT. Residues 848 to 939 form a disordered region; the sequence is EVPVEDEKPS…QSKGGRRRKK (92 aa). Composition is skewed to basic and acidic residues over residues 852–863, 872–889, and 914–925; these read EDEKPSLEKEDA, PEIR…DRLH, and PVRSEADGLTRA. Residues 926–939 show a composition bias toward basic residues; sequence ERRKQSKGGRRRKK.

It belongs to the SecA family. In terms of assembly, monomer and homodimer. Part of the essential Sec protein translocation apparatus which comprises SecA, SecYEG and auxiliary proteins SecDF. Other proteins may also be involved.

Its subcellular location is the cell membrane. The protein localises to the cytoplasm. The enzyme catalyses ATP + H2O + cellular proteinSide 1 = ADP + phosphate + cellular proteinSide 2.. Functionally, part of the Sec protein translocase complex. Interacts with the SecYEG preprotein conducting channel. Has a central role in coupling the hydrolysis of ATP to the transfer of proteins into and across the cell membrane, serving as an ATP-driven molecular motor driving the stepwise translocation of polypeptide chains across the membrane. The sequence is that of Protein translocase subunit SecA 1 from Streptomyces avermitilis (strain ATCC 31267 / DSM 46492 / JCM 5070 / NBRC 14893 / NCIMB 12804 / NRRL 8165 / MA-4680).